The chain runs to 196 residues: ATP-dependent Clp protease proteolytic subunit (196 aa).

Serine 99 acts as the Nucleophile in catalysis. Residue histidine 124 is part of the active site.

Belongs to the peptidase S14 family. Fourteen ClpP subunits assemble into 2 heptameric rings which stack back to back to give a disk-like structure with a central cavity, resembling the structure of eukaryotic proteasomes.

The protein localises to the cytoplasm. The catalysed reaction is Hydrolysis of proteins to small peptides in the presence of ATP and magnesium. alpha-casein is the usual test substrate. In the absence of ATP, only oligopeptides shorter than five residues are hydrolyzed (such as succinyl-Leu-Tyr-|-NHMec, and Leu-Tyr-Leu-|-Tyr-Trp, in which cleavage of the -Tyr-|-Leu- and -Tyr-|-Trp bonds also occurs).. Functionally, cleaves peptides in various proteins in a process that requires ATP hydrolysis. Has a chymotrypsin-like activity. Plays a major role in the degradation of misfolded proteins. The chain is ATP-dependent Clp protease proteolytic subunit from Helicobacter pylori (strain ATCC 700392 / 26695) (Campylobacter pylori).